Here is a 300-residue protein sequence, read N- to C-terminus: MLSNFKKEKMNTSTTFYEIICTLEKYWHNQNCTIIEPLDISVGAGTFHNKTFFGTIGSKPISMAYVQSSRRPSDGRYGKNPNRLQHYYQFQVIIKPSPHNIQCLYLNSLKKLNIDCKTNDIRFVEDNWENPTLGAWGQGWEVWLNGMEVTQFTYFQQVGGINCNPITTEITYGLERIAMHIQNKSNIYDVIWNQDMNNNIITYGDLFLNNEIEHSSYNFKYADSKLHFDLFEKHLQESNRIMKLFNNLLFPAYEHLIYSIHYFNLLDAKKKFSTTQRQTHILNIRNTSKMIATNYYKKQK.

This sequence belongs to the class-II aminoacyl-tRNA synthetase family. As to quaternary structure, tetramer of two alpha and two beta subunits.

It is found in the cytoplasm. The catalysed reaction is tRNA(Gly) + glycine + ATP = glycyl-tRNA(Gly) + AMP + diphosphate. The polypeptide is Glycine--tRNA ligase alpha subunit (glyQ) (Buchnera aphidicola subsp. Baizongia pistaciae (strain Bp)).